Consider the following 93-residue polypeptide: Acylphosphatase (93 aa).

C5 and C49 are disulfide-bonded. The Acylphosphatase-like domain occupies 5-93; the sequence is CIIAWVYGRV…ETLTGFSIRY (89 aa). Catalysis depends on residues R20 and N38.

Belongs to the acylphosphatase family.

It catalyses the reaction an acyl phosphate + H2O = a carboxylate + phosphate + H(+). This chain is Acylphosphatase, found in Salmonella typhi.